The chain runs to 348 residues: Fructose-1,6-bisphosphatase class 1 2 (348 aa).

Mg(2+) contacts are provided by E93, D117, L119, and D120. Substrate is bound by residues 120 to 123 (DGSS), N213, Y244, and K274. Position 280 (E280) interacts with Mg(2+).

This sequence belongs to the FBPase class 1 family. As to quaternary structure, homotetramer. It depends on Mg(2+) as a cofactor.

It localises to the cytoplasm. It carries out the reaction beta-D-fructose 1,6-bisphosphate + H2O = beta-D-fructose 6-phosphate + phosphate. It functions in the pathway carbohydrate biosynthesis; gluconeogenesis. This chain is Fructose-1,6-bisphosphatase class 1 2, found in Christiangramia forsetii (strain DSM 17595 / CGMCC 1.15422 / KT0803) (Gramella forsetii).